The chain runs to 329 residues: Quinone oxidoreductase (329 aa).

Alanine 2 is subject to N-acetylalanine. Lysine 23 is modified (N6-acetyllysine). NADP(+)-binding positions include tyrosine 53, 158 to 161 (SGGV), glycine 181, histidine 200, asparagine 229, 246 to 249 (VGSR), and 269 to 271 (VAL). The residue at position 248 (serine 248) is a Phosphoserine.

Belongs to the zinc-containing alcohol dehydrogenase family. Quinone oxidoreductase subfamily. Homotetramer.

It is found in the cytoplasm. It carries out the reaction 2 a quinone + NADPH + H(+) = 2 a 1,4-benzosemiquinone + NADP(+). Functionally, does not have alcohol dehydrogenase activity. Binds NADP and acts through a one-electron transfer process. Orthoquinones, such as 1,2-naphthoquinone or 9,10-phenanthrenequinone, are the best substrates (in vitro). May act in the detoxification of xenobiotics. Interacts with (AU)-rich elements (ARE) in the 3'-UTR of target mRNA species and enhances their stability. NADPH binding interferes with mRNA binding. The sequence is that of Quinone oxidoreductase (CRYZ) from Sus scrofa (Pig).